A 408-amino-acid polypeptide reads, in one-letter code: Acetate kinase (408 aa).

Mg(2+) is bound at residue Asn7. Position 14 (Lys14) interacts with ATP. Substrate is bound at residue Arg91. Residue Asp148 is the Proton donor/acceptor of the active site. ATP is bound by residues 208-212 (HLGNG), 283-285 (DFR), and 331-335 (GIGEN). Position 384 (Glu384) interacts with Mg(2+).

It belongs to the acetokinase family. In terms of assembly, homodimer. Mg(2+) serves as cofactor. It depends on Mn(2+) as a cofactor.

It localises to the cytoplasm. The enzyme catalyses acetate + ATP = acetyl phosphate + ADP. It functions in the pathway metabolic intermediate biosynthesis; acetyl-CoA biosynthesis; acetyl-CoA from acetate: step 1/2. Catalyzes the formation of acetyl phosphate from acetate and ATP. Can also catalyze the reverse reaction. This is Acetate kinase from Methanosarcina mazei (Methanosarcina frisia).